Here is a 723-residue protein sequence, read N- to C-terminus: DNA-binding protein RFX2 (723 aa).

A disordered region spans residues 1 to 46; that stretch reads MQNSEGGADSPASVALRPSAAAPPVPASPQRVLVQAASSNPKGAQM. The segment covering 10-20 has biased composition (low complexity); the sequence is SPASVALRPSA. A Phosphoserine modification is found at serine 28. Positions 199-274 form a DNA-binding region, RFX-type winged-helix; sequence HLQWLLDNYE…YHYYGIRLKP (76 aa). The segment at 292-332 is disordered; sequence QQPMHQKPRYRPAQKTDSLGDSGSHSGLHSTPEQTMAVQSQ. Low complexity predominate over residues 308–321; it reads DSLGDSGSHSGLHS. Positions 322-332 are enriched in polar residues; the sequence is TPEQTMAVQSQ. Serine 416 bears the Phosphoserine mark. The tract at residues 688 to 723 is disordered; that stretch reads MGDEQRGSEAGPDARSLGEPLVKRERSDPNHSLQGI.

The protein belongs to the RFX family. In terms of assembly, homodimer; probably only forms homodimers in testis. Heterodimer; heterodimerizes with RFX1 and RFX3.

The protein localises to the nucleus. It is found in the cytoplasm. Its function is as follows. Transcription factor that acts as a key regulator of spermatogenesis. Acts by regulating expression of genes required for the haploid phase during spermiogenesis, such as genes required for cilium assembly and function. Recognizes and binds the X-box, a regulatory motif with DNA sequence 5'-GTNRCC(0-3N)RGYAAC-3' present on promoters. Probably activates transcription of the testis-specific histone gene H1-6. This Homo sapiens (Human) protein is DNA-binding protein RFX2 (RFX2).